The following is a 29-amino-acid chain: Cytochrome b6-f complex subunit 8 (29 aa).

Residues 3–23 traverse the membrane as a helical segment; sequence IVDIAWAALMVVFTFSLSLVV.

The protein belongs to the PetN family. As to quaternary structure, the 4 large subunits of the cytochrome b6-f complex are cytochrome b6, subunit IV (17 kDa polypeptide, PetD), cytochrome f and the Rieske protein, while the 4 small subunits are PetG, PetL, PetM and PetN. The complex functions as a dimer.

Its subcellular location is the plastid. The protein localises to the chloroplast thylakoid membrane. Functionally, component of the cytochrome b6-f complex, which mediates electron transfer between photosystem II (PSII) and photosystem I (PSI), cyclic electron flow around PSI, and state transitions. The protein is Cytochrome b6-f complex subunit 8 of Gnetum parvifolium (Small-leaved jointfir).